Consider the following 117-residue polypeptide: MHEYSIVSALIEQCEQHAQANHADKITRVDIKLGVMSGVEPSLLQTAFDTFKLDGICNAAQLNIQIQPLVILCQDCQTESVLSERTVVCPACQSFRTRVLDGEDMLLMQLEMEQNED.

Residue histidine 2 participates in Ni(2+) binding. Residues cysteine 73, cysteine 76, cysteine 89, and cysteine 92 each coordinate Zn(2+).

This sequence belongs to the HypA/HybF family.

Its function is as follows. Involved in the maturation of [NiFe] hydrogenases. Required for nickel insertion into the metal center of the hydrogenase. The chain is Hydrogenase maturation factor HypA from Shewanella baltica (strain OS195).